Consider the following 860-residue polypeptide: Leucine--tRNA ligase (860 aa).

The short motif at 42-52 (PYPSGRLHMGH) is the 'HIGH' region element. The 'KMSKS' region motif lies at 619 to 623 (KMSKS). An ATP-binding site is contributed by Lys-622.

This sequence belongs to the class-I aminoacyl-tRNA synthetase family.

The protein localises to the cytoplasm. The catalysed reaction is tRNA(Leu) + L-leucine + ATP = L-leucyl-tRNA(Leu) + AMP + diphosphate. The sequence is that of Leucine--tRNA ligase from Shigella sonnei (strain Ss046).